The sequence spans 504 residues: Peroxisomal catalase (504 aa).

Active-site residues include H63 and N136. Y345 provides a ligand contact to heme. A Microbody targeting signal motif is present at residues 502–504; sequence NKF.

This sequence belongs to the catalase family. Requires heme as cofactor.

The protein resides in the peroxisome matrix. It carries out the reaction 2 H2O2 = O2 + 2 H2O. Functionally, catalyzes the degradation of hydrogen peroxide (H(2)O(2)) generated by peroxisomal oxidases to water and oxygen, thereby protecting cells from the toxic effects of hydrogen peroxide. The polypeptide is Peroxisomal catalase (CTA1) (Candida boidinii (Yeast)).